The chain runs to 345 residues: Phenylalanine--tRNA ligase alpha subunit (345 aa).

A Mg(2+)-binding site is contributed by Glu-253.

Belongs to the class-II aminoacyl-tRNA synthetase family. Phe-tRNA synthetase alpha subunit type 1 subfamily. Tetramer of two alpha and two beta subunits. Mg(2+) serves as cofactor.

It is found in the cytoplasm. It catalyses the reaction tRNA(Phe) + L-phenylalanine + ATP = L-phenylalanyl-tRNA(Phe) + AMP + diphosphate + H(+). The polypeptide is Phenylalanine--tRNA ligase alpha subunit (Nitratidesulfovibrio vulgaris (strain DP4) (Desulfovibrio vulgaris)).